The sequence spans 323 residues: Acetyl-coenzyme A carboxylase carboxyl transferase subunit alpha (323 aa).

A CoA carboxyltransferase C-terminal domain is found at 40-293 (LSEKSLQLTK…RKALSDSLKT (254 aa)).

The protein belongs to the AccA family. Acetyl-CoA carboxylase is a heterohexamer composed of biotin carboxyl carrier protein (AccB), biotin carboxylase (AccC) and two subunits each of ACCase subunit alpha (AccA) and ACCase subunit beta (AccD).

Its subcellular location is the cytoplasm. The enzyme catalyses N(6)-carboxybiotinyl-L-lysyl-[protein] + acetyl-CoA = N(6)-biotinyl-L-lysyl-[protein] + malonyl-CoA. It functions in the pathway lipid metabolism; malonyl-CoA biosynthesis; malonyl-CoA from acetyl-CoA: step 1/1. Component of the acetyl coenzyme A carboxylase (ACC) complex. First, biotin carboxylase catalyzes the carboxylation of biotin on its carrier protein (BCCP) and then the CO(2) group is transferred by the carboxyltransferase to acetyl-CoA to form malonyl-CoA. This is Acetyl-coenzyme A carboxylase carboxyl transferase subunit alpha from Polynucleobacter asymbioticus (strain DSM 18221 / CIP 109841 / QLW-P1DMWA-1) (Polynucleobacter necessarius subsp. asymbioticus).